Reading from the N-terminus, the 311-residue chain is tRNA pseudouridine synthase B (311 aa).

H43 is a binding site for substrate. D48 serves as the catalytic Nucleophile. Substrate contacts are provided by Y76, Y179, and L200.

Belongs to the pseudouridine synthase TruB family. Type 1 subfamily.

The enzyme catalyses uridine(55) in tRNA = pseudouridine(55) in tRNA. Functionally, responsible for synthesis of pseudouridine from uracil-55 in the psi GC loop of transfer RNAs. The protein is tRNA pseudouridine synthase B of Sodalis glossinidius (strain morsitans).